The sequence spans 224 residues: Small ribosomal subunit protein eS1 (224 aa).

It belongs to the eukaryotic ribosomal protein eS1 family.

This is Small ribosomal subunit protein eS1 from Methanococcus maripaludis (strain C7 / ATCC BAA-1331).